The following is a 343-amino-acid chain: S-adenosylmethionine:tRNA ribosyltransferase-isomerase (343 aa).

It belongs to the QueA family. As to quaternary structure, monomer.

It is found in the cytoplasm. The enzyme catalyses 7-aminomethyl-7-carbaguanosine(34) in tRNA + S-adenosyl-L-methionine = epoxyqueuosine(34) in tRNA + adenine + L-methionine + 2 H(+). It functions in the pathway tRNA modification; tRNA-queuosine biosynthesis. Functionally, transfers and isomerizes the ribose moiety from AdoMet to the 7-aminomethyl group of 7-deazaguanine (preQ1-tRNA) to give epoxyqueuosine (oQ-tRNA). The protein is S-adenosylmethionine:tRNA ribosyltransferase-isomerase of Coxiella burnetii (strain CbuG_Q212) (Coxiella burnetii (strain Q212)).